A 253-amino-acid chain; its full sequence is MLAKRIIPCLDVKDGRVVKGVNFLNLKDAGDPVQIASEYNELGADELVFLDITASYEKRKIMIEVVKRTSEKVFIPLTVGGGISDLDDIKDILRAGADKVSINTQAVKQPTLIRQAAVRFGSQCVVVAIDAKRRSDGSGFDVYINGGRVNTGLDVIEWAKKVESLGAGEILLTSMDKDGTKDGYDIELTRMVSEAVNIPVIASGGAGNKEHFKEVFTEGKADAALAASVFHYRELEIKEVKRYLKEEGIPVRI.

Catalysis depends on residues Asp11 and Asp130.

The protein belongs to the HisA/HisF family. As to quaternary structure, heterodimer of HisH and HisF.

It is found in the cytoplasm. It catalyses the reaction 5-[(5-phospho-1-deoxy-D-ribulos-1-ylimino)methylamino]-1-(5-phospho-beta-D-ribosyl)imidazole-4-carboxamide + L-glutamine = D-erythro-1-(imidazol-4-yl)glycerol 3-phosphate + 5-amino-1-(5-phospho-beta-D-ribosyl)imidazole-4-carboxamide + L-glutamate + H(+). It participates in amino-acid biosynthesis; L-histidine biosynthesis; L-histidine from 5-phospho-alpha-D-ribose 1-diphosphate: step 5/9. Functionally, IGPS catalyzes the conversion of PRFAR and glutamine to IGP, AICAR and glutamate. The HisF subunit catalyzes the cyclization activity that produces IGP and AICAR from PRFAR using the ammonia provided by the HisH subunit. The polypeptide is Imidazole glycerol phosphate synthase subunit HisF (Thermoanaerobacter sp. (strain X514)).